We begin with the raw amino-acid sequence, 1598 residues long: Structural maintenance of chromosomes flexible hinge domain-containing protein GMI1 (1598 aa).

Positions 1191 to 1218 (VTSAPTSEREESGYSTPHSKTTPPPESG) are disordered. Coiled coils occupy residues 1258–1301 (TEDL…ASLE) and 1565–1595 (EEMM…FTAM).

Highly expressed in closed buds and open flowers. Expressed at low levels in roots, stems, cauline leaves and siliques. Expressed in the region of the shoot and floral meristems.

The protein resides in the nucleus. Functionally, contributes to DNA double-strand break (DSB) repair via somatic homologous recombination. Functions downstream of ATM. The protein is Structural maintenance of chromosomes flexible hinge domain-containing protein GMI1 of Arabidopsis thaliana (Mouse-ear cress).